We begin with the raw amino-acid sequence, 277 residues long: Glycerol-3-phosphate acyltransferase (277 aa).

A run of 5 helical transmembrane segments spans residues 3–23 (LFIF…AIIV), 55–75 (IMVM…AKLL), 79–99 (PVTV…PVFF), 111–131 (IGAL…TWLL), and 155–175 (LILV…ILVL). The segment at 207–277 (SPATSAEQEF…PKTKTVKEKE (71 aa)) is disordered. The span at 216–239 (FPGKEVIDTNIDETEKTEQAEAVK) shows a compositional bias: basic and acidic residues. 2 stretches are compositionally biased toward basic residues: residues 240–253 (KPKA…AKKT) and 262–271 (KPRSTKPKTK).

The protein belongs to the PlsY family. Probably interacts with PlsX.

It localises to the cell inner membrane. It catalyses the reaction an acyl phosphate + sn-glycerol 3-phosphate = a 1-acyl-sn-glycero-3-phosphate + phosphate. Its pathway is lipid metabolism; phospholipid metabolism. Its function is as follows. Catalyzes the transfer of an acyl group from acyl-phosphate (acyl-PO(4)) to glycerol-3-phosphate (G3P) to form lysophosphatidic acid (LPA). This enzyme utilizes acyl-phosphate as fatty acyl donor, but not acyl-CoA or acyl-ACP. This chain is Glycerol-3-phosphate acyltransferase, found in Legionella pneumophila (strain Paris).